Here is a 275-residue protein sequence, read N- to C-terminus: MPVVWTIARKELADGLRNRWLLAISLLFALLSVGIAWFGAAAAGQVGFTSVPATVASLTSLATFLMPLIALLLAYDAIVGEEEGGTLLLLLTYPLGRGQLLLGKFLGHGLILALATLIGFGSAALAILALVPEVEAAILLGAFGRFMGSSLLLGCVFLALAYALSSRASEKSSAAGQALGLWFFFVLLFDLALLAILVLSQGHLSPRLLPWLLLLNPTDLYRLINLSGFDAAAAGGVVPLASDLPVSASALWLALALWAGAALALAHGLFRRRPI.

6 helical membrane-spanning segments follow: residues 20-40, 60-80, 111-131, 146-166, 179-199, and 250-270; these read WLLAISLLFALLSVGIAWFGA, SLATFLMPLIALLLAYDAIVG, ILALATLIGFGSAALAILALV, FMGSSLLLGCVFLALAYALSS, LGLWFFFVLLFDLALLAILVL, and ALWLALALWAGAALALAHGLF.

As to quaternary structure, the complex may be composed of an ATP-binding protein (NosF), a transmembrane protein (NosY) and a solute-binding protein (NosD).

It localises to the cell inner membrane. In terms of biological role, required for the assembly of the copper chromophores of nitrous oxide reductase. Could be part of the ABC transporter complex NosDFY. The chain is Probable ABC transporter permease protein NosY (nosY) from Pseudomonas aeruginosa (strain ATCC 15692 / DSM 22644 / CIP 104116 / JCM 14847 / LMG 12228 / 1C / PRS 101 / PAO1).